We begin with the raw amino-acid sequence, 133 residues long: Profilin-3 (133 aa).

Belongs to the profilin family. Occurs in many kinds of cells as a complex with monomeric actin in a 1:1 ratio.

It is found in the cytoplasm. Its subcellular location is the cytoskeleton. Binds to actin and affects the structure of the cytoskeleton. At high concentrations, profilin prevents the polymerization of actin, whereas it enhances it at low concentrations. By binding to PIP2, it inhibits the formation of IP3 and DG. The sequence is that of Profilin-3 from Ambrosia artemisiifolia (Common ragweed).